The following is a 373-amino-acid chain: MHSESPIIRRQSTRIYVGDVPIGDGAPIAVQSMTNTLTTDVAATVAQIRALEKVGADIVRVSVPTMDAAEAFKLIKQQVNIPLVADIHFDYRIALKVAEYGVDCLRINPGNIGNEERIRSVVECARDYNIPIRIGINGGSLEKEIQLKYGEPTPDALVESAMRHVDILDRLNFDQFKVSVKASDVFLAVESYRRLAKQIKQPLHLGITEAGGARAGSVKSAVGLGMLLAEGIGDTLRISLAADPVEEIKVGFDILKSLRIRSRGINFIACPTCSRQEFDVIGTVNELEQRLEDITTPMDVSIIGCVVNGPGEAEVSHLGVAGSSRKSAFYEDGIRQKERFDNDNVIDQLETKIRAKAAMLDVNNRINVQEVEK.

Cysteine 270, cysteine 273, cysteine 305, and glutamate 312 together coordinate [4Fe-4S] cluster.

It belongs to the IspG family. [4Fe-4S] cluster serves as cofactor.

It carries out the reaction (2E)-4-hydroxy-3-methylbut-2-enyl diphosphate + oxidized [flavodoxin] + H2O + 2 H(+) = 2-C-methyl-D-erythritol 2,4-cyclic diphosphate + reduced [flavodoxin]. Its pathway is isoprenoid biosynthesis; isopentenyl diphosphate biosynthesis via DXP pathway; isopentenyl diphosphate from 1-deoxy-D-xylulose 5-phosphate: step 5/6. In terms of biological role, converts 2C-methyl-D-erythritol 2,4-cyclodiphosphate (ME-2,4cPP) into 1-hydroxy-2-methyl-2-(E)-butenyl 4-diphosphate. In Photobacterium profundum (strain SS9), this protein is 4-hydroxy-3-methylbut-2-en-1-yl diphosphate synthase (flavodoxin).